Here is a 607-residue protein sequence, read N- to C-terminus: Elongation factor 4 (607 aa).

One can recognise a tr-type G domain in the interval 11-193 (ENIRNFSIIA…KIVEVVPAPD (183 aa)). GTP is bound by residues 23–28 (DHGKST) and 140–143 (NKID).

Belongs to the TRAFAC class translation factor GTPase superfamily. Classic translation factor GTPase family. LepA subfamily.

It is found in the cell membrane. The enzyme catalyses GTP + H2O = GDP + phosphate + H(+). Its function is as follows. Required for accurate and efficient protein synthesis under certain stress conditions. May act as a fidelity factor of the translation reaction, by catalyzing a one-codon backward translocation of tRNAs on improperly translocated ribosomes. Back-translocation proceeds from a post-translocation (POST) complex to a pre-translocation (PRE) complex, thus giving elongation factor G a second chance to translocate the tRNAs correctly. Binds to ribosomes in a GTP-dependent manner. The sequence is that of Elongation factor 4 from Staphylococcus aureus (strain MW2).